The chain runs to 364 residues: Dihydroorotate dehydrogenase (quinone) (364 aa).

FMN contacts are provided by residues 62 to 66 and threonine 86; that span reads AGFDK. Residue lysine 66 participates in substrate binding. Substrate is bound at residue 111-115; that stretch reads NRMGF. FMN-binding residues include asparagine 142 and asparagine 175. Asparagine 175 contacts substrate. Serine 178 acts as the Nucleophile in catalysis. Asparagine 180 lines the substrate pocket. FMN-binding residues include lysine 216 and threonine 244. 245–246 provides a ligand contact to substrate; that stretch reads NT. FMN contacts are provided by residues glycine 267, glycine 296, and 317-318; that span reads YT.

Belongs to the dihydroorotate dehydrogenase family. Type 2 subfamily. As to quaternary structure, monomer. It depends on FMN as a cofactor.

It localises to the cell membrane. It carries out the reaction (S)-dihydroorotate + a quinone = orotate + a quinol. It participates in pyrimidine metabolism; UMP biosynthesis via de novo pathway; orotate from (S)-dihydroorotate (quinone route): step 1/1. Catalyzes the conversion of dihydroorotate to orotate with quinone as electron acceptor. This chain is Dihydroorotate dehydrogenase (quinone), found in Anaeromyxobacter dehalogenans (strain 2CP-1 / ATCC BAA-258).